Here is a 565-residue protein sequence, read N- to C-terminus: FACT complex subunit ctc-1 (565 aa).

Disordered stretches follow at residues Gly-151–Gly-173 and Leu-477–Ala-565. The segment covering Asn-152 to Gly-165 has biased composition (gly residues). Acidic residues-rich tracts occupy residues Gly-478–Ala-489, Asp-500–Tyr-522, and Gly-532–Glu-553.

This sequence belongs to the SSRP1 family. Forms a stable heterodimer with ctc-2/spt16. The dimer of ctc-1 and ctc-2 weakly associates with multiple molecules of nhp-1/nhp6 to form the FACT complex.

It is found in the nucleus. The protein localises to the chromosome. Functionally, component of the FACT complex, a general chromatin factor that acts to reorganize nucleosomes. The FACT complex is involved in multiple processes that require DNA as a template such as mRNA elongation, DNA replication and DNA repair. During transcription elongation the FACT complex acts as a histone chaperone that both destabilizes and restores nucleosomal structure. It facilitates the passage of RNA polymerase II and transcription by promoting the dissociation of one histone H2A-H2B dimer from the nucleosome, then subsequently promotes the reestablishment of the nucleosome following the passage of RNA polymerase II. This chain is FACT complex subunit ctc-1 (ctc-1), found in Neurospora crassa (strain ATCC 24698 / 74-OR23-1A / CBS 708.71 / DSM 1257 / FGSC 987).